The following is a 254-amino-acid chain: Ribosomal RNA small subunit methyltransferase G (254 aa).

Residues Gly-92, 143 to 144, and Arg-156 contribute to the S-adenosyl-L-methionine site; that span reads AE.

Belongs to the methyltransferase superfamily. RNA methyltransferase RsmG family.

Its subcellular location is the cytoplasm. Functionally, specifically methylates the N7 position of a guanine in 16S rRNA. In Leptospira interrogans serogroup Icterohaemorrhagiae serovar copenhageni (strain Fiocruz L1-130), this protein is Ribosomal RNA small subunit methyltransferase G.